A 188-amino-acid polypeptide reads, in one-letter code: Protein GrpE (188 aa).

A compositionally biased stretch (low complexity) spans 1 to 22; the sequence is MEENKQNQNLNTEETTEQQTEA. The interval 1–26 is disordered; that stretch reads MEENKQNQNLNTEETTEQQTEAETVE.

Belongs to the GrpE family. As to quaternary structure, homodimer.

It is found in the cytoplasm. Participates actively in the response to hyperosmotic and heat shock by preventing the aggregation of stress-denatured proteins, in association with DnaK and GrpE. It is the nucleotide exchange factor for DnaK and may function as a thermosensor. Unfolded proteins bind initially to DnaJ; upon interaction with the DnaJ-bound protein, DnaK hydrolyzes its bound ATP, resulting in the formation of a stable complex. GrpE releases ADP from DnaK; ATP binding to DnaK triggers the release of the substrate protein, thus completing the reaction cycle. Several rounds of ATP-dependent interactions between DnaJ, DnaK and GrpE are required for fully efficient folding. The chain is Protein GrpE from Exiguobacterium sibiricum (strain DSM 17290 / CCUG 55495 / CIP 109462 / JCM 13490 / 255-15).